Reading from the N-terminus, the 387-residue chain is Putative serine/threonine-protein kinase (387 aa).

One can recognise a Protein kinase domain in the interval 15–344 (YQIEKLLNRG…ERVLEGQVEI (330 aa)). ATP contacts are provided by residues 21 to 29 (LNRGGMDSY) and K55. D164 functions as the Proton acceptor in the catalytic mechanism. The next 2 helical transmembrane spans lie at 232-252 (PPNA…MLVG) and 363-383 (SIFT…LLIF).

The protein belongs to the protein kinase superfamily. Ser/Thr protein kinase family.

Its subcellular location is the cell membrane. It carries out the reaction L-seryl-[protein] + ATP = O-phospho-L-seryl-[protein] + ADP + H(+). It catalyses the reaction L-threonyl-[protein] + ATP = O-phospho-L-threonyl-[protein] + ADP + H(+). The polypeptide is Putative serine/threonine-protein kinase (Mycoplasma genitalium (strain ATCC 33530 / DSM 19775 / NCTC 10195 / G37) (Mycoplasmoides genitalium)).